Reading from the N-terminus, the 350-residue chain is Glycerol-1-phosphate dehydrogenase [NAD(P)+] (350 aa).

NAD(+) contacts are provided by residues 97 to 101 (GSKID) and 119 to 122 (TTPS). Asp-124 provides a ligand contact to substrate. Ser-128 contacts NAD(+). Asp-171 is a binding site for substrate. Residues Asp-171 and His-251 each contribute to the Zn(2+) site. His-255 lines the substrate pocket. Zn(2+) is bound at residue His-267.

This sequence belongs to the glycerol-1-phosphate dehydrogenase family. The cofactor is Zn(2+).

Its subcellular location is the cytoplasm. It catalyses the reaction sn-glycerol 1-phosphate + NAD(+) = dihydroxyacetone phosphate + NADH + H(+). The catalysed reaction is sn-glycerol 1-phosphate + NADP(+) = dihydroxyacetone phosphate + NADPH + H(+). Its pathway is membrane lipid metabolism; glycerophospholipid metabolism. Its function is as follows. Catalyzes the NAD(P)H-dependent reduction of dihydroxyacetonephosphate (DHAP or glycerone phosphate) to glycerol 1-phosphate (G1P). The G1P thus generated is used as the glycerophosphate backbone of phospholipids in the cellular membranes of Archaea. This Picrophilus torridus (strain ATCC 700027 / DSM 9790 / JCM 10055 / NBRC 100828 / KAW 2/3) protein is Glycerol-1-phosphate dehydrogenase [NAD(P)+].